We begin with the raw amino-acid sequence, 21 residues long: Protein YmjD (21 aa).

The polypeptide is Protein YmjD (ymjD) (Escherichia coli (strain K12)).